We begin with the raw amino-acid sequence, 162 residues long: 2-amino-4-hydroxy-6-hydroxymethyldihydropteridine pyrophosphokinase (162 aa).

It belongs to the HPPK family.

It catalyses the reaction 6-hydroxymethyl-7,8-dihydropterin + ATP = (7,8-dihydropterin-6-yl)methyl diphosphate + AMP + H(+). It functions in the pathway cofactor biosynthesis; tetrahydrofolate biosynthesis; 2-amino-4-hydroxy-6-hydroxymethyl-7,8-dihydropteridine diphosphate from 7,8-dihydroneopterin triphosphate: step 4/4. In terms of biological role, catalyzes the transfer of pyrophosphate from adenosine triphosphate (ATP) to 6-hydroxymethyl-7,8-dihydropterin, an enzymatic step in folate biosynthesis pathway. The sequence is that of 2-amino-4-hydroxy-6-hydroxymethyldihydropteridine pyrophosphokinase (folK) from Streptococcus pyogenes serotype M3 (strain ATCC BAA-595 / MGAS315).